A 247-amino-acid polypeptide reads, in one-letter code: Phycocyanobilin:ferredoxin oxidoreductase (247 aa).

Belongs to the HY2 family.

It carries out the reaction (2R,3Z)-phycocyanobilin + 4 oxidized [2Fe-2S]-[ferredoxin] = biliverdin IXalpha + 4 reduced [2Fe-2S]-[ferredoxin] + 4 H(+). In terms of biological role, catalyzes the four-electron reduction of biliverdin IX-alpha (2-electron reduction at both the A and D rings); the reaction proceeds via an isolatable 2-electron intermediate, 181,182-dihydrobiliverdin. This Prochlorococcus marinus (strain SARG / CCMP1375 / SS120) protein is Phycocyanobilin:ferredoxin oxidoreductase (pcyA).